Here is a 276-residue protein sequence, read N- to C-terminus: Large ribosomal subunit protein uL2 (276 aa).

Disordered regions lie at residues 37–59 (QFQKSGRNNNGHITTRHKGGGHK) and 225–276 (VMNP…RHKR). The span at 39–49 (QKSGRNNNGHI) shows a compositional bias: polar residues. Residues 50 to 59 (TTRHKGGGHK) show a composition bias toward basic residues.

This sequence belongs to the universal ribosomal protein uL2 family. In terms of assembly, part of the 50S ribosomal subunit. Forms a bridge to the 30S subunit in the 70S ribosome.

One of the primary rRNA binding proteins. Required for association of the 30S and 50S subunits to form the 70S ribosome, for tRNA binding and peptide bond formation. It has been suggested to have peptidyltransferase activity; this is somewhat controversial. Makes several contacts with the 16S rRNA in the 70S ribosome. In Cupriavidus pinatubonensis (strain JMP 134 / LMG 1197) (Cupriavidus necator (strain JMP 134)), this protein is Large ribosomal subunit protein uL2.